A 170-amino-acid chain; its full sequence is Flavodoxin (170 aa).

One can recognise a Flavodoxin-like domain in the interval 4-165 (IGLFFGTQTG…RIQAWVAQLK (162 aa)).

It belongs to the flavodoxin family. The cofactor is FMN.

Functionally, low-potential electron donor to a number of redox enzymes. The sequence is that of Flavodoxin (isiB) from Picosynechococcus sp. (strain ATCC 27264 / PCC 7002 / PR-6) (Agmenellum quadruplicatum).